Consider the following 163-residue polypeptide: Protein-export protein SecB (163 aa).

This sequence belongs to the SecB family. In terms of assembly, homotetramer, a dimer of dimers. One homotetramer interacts with 1 SecA dimer.

The protein localises to the cytoplasm. In terms of biological role, one of the proteins required for the normal export of preproteins out of the cell cytoplasm. It is a molecular chaperone that binds to a subset of precursor proteins, maintaining them in a translocation-competent state. It also specifically binds to its receptor SecA. This Brucella canis (strain ATCC 23365 / NCTC 10854 / RM-666) protein is Protein-export protein SecB.